The following is a 66-amino-acid chain: MKKEIHPEYIDCTVTCACGNTFKTKSNKSEIKIDICDKCHPFFTGSEKIVDSAGRVEKFKKKYALN.

Positions 16, 18, 36, and 39 each coordinate Zn(2+).

Belongs to the bacterial ribosomal protein bL31 family. Type A subfamily. As to quaternary structure, part of the 50S ribosomal subunit. Zn(2+) is required as a cofactor.

Its function is as follows. Binds the 23S rRNA. The sequence is that of Large ribosomal subunit protein bL31 from Campylobacter curvus (strain 525.92).